Here is a 74-residue protein sequence, read N- to C-terminus: Anaphase-promoting complex subunit 13 (74 aa).

The segment at 33–53 (LNELPDPEQDNGGTTESVKEQ) is disordered.

The protein belongs to the APC13 family. As to quaternary structure, the mammalian APC/C is composed at least of 14 distinct subunits ANAPC1, ANAPC2, CDC27/APC3, ANAPC4, ANAPC5, CDC16/APC6, ANAPC7, CDC23/APC8, ANAPC10, ANAPC11, CDC26/APC12, ANAPC13, ANAPC15 and ANAPC16 that assemble into a complex of at least 19 chains with a combined molecular mass of around 1.2 MDa; APC/C interacts with FZR1 and FBXO5.

The protein resides in the nucleus. Its pathway is protein modification; protein ubiquitination. Functionally, component of the anaphase promoting complex/cyclosome (APC/C), a cell cycle-regulated E3 ubiquitin ligase that controls progression through mitosis and the G1 phase of the cell cycle. The APC/C complex acts by mediating ubiquitination and subsequent degradation of target proteins: it mainly mediates the formation of 'Lys-11'-linked polyubiquitin chains and, to a lower extent, the formation of 'Lys-48'- and 'Lys-63'-linked polyubiquitin chains. The APC/C complex catalyzes assembly of branched 'Lys-11'-/'Lys-48'-linked branched ubiquitin chains on target proteins. The chain is Anaphase-promoting complex subunit 13 (ANAPC13) from Pongo abelii (Sumatran orangutan).